We begin with the raw amino-acid sequence, 493 residues long: Signal recognition particle subunit SRP54 3 (493 aa).

The tract at residues 1-294 (MVLADVGGSI…NVEPFVARLL (294 aa)) is G-domain. GTP is bound by residues 107–114 (GLQGSGKT), 189–193 (DTSGR), and 247–250 (TKLD). Residues 295 to 493 (GRGDLPGLID…KMLAGMRGGA (199 aa)) are M-domain.

This sequence belongs to the GTP-binding SRP family. SRP54 subfamily. As to quaternary structure, component of a signal recognition particle (SRP) complex that consists of a 7SL RNA molecule of 300 nucleotides and six protein subunits: SRP72, SRP68, SRP54, SRP19, SRP14 and SRP9.

The protein resides in the cytoplasm. It localises to the endoplasmic reticulum. It catalyses the reaction GTP + H2O = GDP + phosphate + H(+). Functionally, component of the signal recognition particle (SRP) complex, a ribonucleoprotein complex that mediates the cotranslational targeting of secretory and membrane proteins to the endoplasmic reticulum (ER). As part of the SRP complex, associates with the SRP receptor (SR) component SRPRA to target secretory proteins to the endoplasmic reticulum membrane. Binds to the signal sequence of presecretory proteins when they emerge from the ribosomes. Displays basal GTPase activity, and stimulates reciprocal GTPase activation of the SR subunit SRPRA. Forms a guanosine 5'-triphosphate (GTP)-dependent complex with the SR subunit SRPRA. SR compaction and GTPase mediated rearrangement of SR drive SRP-mediated cotranslational protein translocation into the ER. Requires the presence of SRP9/SRP14 and/or SRP19 to stably interact with RNA. The protein is Signal recognition particle subunit SRP54 3 (SRP54-3) of Hordeum vulgare (Barley).